The chain runs to 1520 residues: MKLSGLYHDADVTHRQPLSENTHQDPISSQDSRKNSRTPQDPRRAAQIHRQCTSSASNLPSNGNNSIHMRFASELPDQVLQPMYASQNQTTNSQCNFTSLPYQPNYDAYRSIESSYRESRNTDRGYDSNFRHHSHRPRGGKGRYDSRNYFNPNSKYQQPYGRFFPRSYNRRGRGHRLHDFSNRPADLSYQQYMHPNYEQYNPDLRMNNYKDVTQLTTNFNFQAQDYSMAFSQTSITTDPTYVQSDNHNYPTKTQTTPETTKTKEHENAKDNKEHKKQQVSTSPDAISLSYRPSSQKMDLIKKIYDTEVIPLPKEALIDNGSYCGVDTQKYKKTHIRCRSIQKTKGHSSQTINKHKVQKHNENHVPSRSDLKQRKSNQHEDEAVTEARDFSKLDPLLSPLPMTPEPTLNFAVHKTKIHSDSELHHTKKNIHRSKTSLQDRVLISKHAPRAPTKDNSYKKHHDPKDTNDPKMKHSRGRTTSKKNTANSNGHQDVREVAVKNVSGKAAKNTSKKSDPSHNLHGKTSDEQYKTSPDNEKISTPPKSKTHHCIHDSSSSEEGQYKSPNNSESNYGNCLSDKFYDNFTKTTPNSKTNHKTEESTENTDLNSFSNENTNKTEIEDSNIIQPFSQLFCNETIIPSTSACPTQETPSTMNRNCASKKHSAGANKNLTDNSPIRSHSNPSSFTAFNKSNSGNSTMNSTSNGDECTDKKPNCSSTENKSETSNQTNGENSDKPLSKTFTEVSDRASSRASSRASSRASSRASSRASSRASSRASSRTSSRASSRAFSRASSRVSSRASSRASSRASSRASSRASSRASGRASGRASSRASSRVSSRASSRASSRASSRASSRASSRASSRVSSKASSRASSRASSRASSRASSRASSRASSRASSRASSRASSRASSRASSRASSRASSRASSRASSRASSRASSRASGRASSKASSRASSRASGKTPNNKLMSNIPSPQTYEKTSNKRKPRQIYCDSNKRQIYPHDTSISTEAEVSEIKFRCGPELNFYKNAAARLQSFNHNDQFYNPRFRPHIRTNRKKSESTNYTDSESSTSRSRSHSRYSPDSLNTPKRKKHKSGSSSISSSIEENSRSNSRTETGTDKLITFNYQHSRTRSSSSSSVSSSCSSSRSKSWRKSRYKNSEDPATYSPRSRLQQLEKQTRPKSASRDKTKIKSPNHESKHRHADMFRNSQKTGEKFPLDNSSPSNTHEQSNHLENAIDQEQKKTPKTTNTTTNTIYRPRDNQSNISRNTTKCKKKRTRDDDSDSSMQNFFKKRISGTQKTDSEISEIEEELSYREYVRRKEKKESAKYKIHRGRVSTKDFRKLFRNTIRAFEYKQIPKKPFPENKLKEAVYNICSNGCSNTGAIIMYFTRSKQVAEIIKTMQRELMIRPNITVSEPFKMNHAPPNYYDKDAINQFIELQKQGPQELWDKLENNTHDLFTRHSDVKTLMVYAATPIDFVMASKICNKYAKDKPKEIVLRVCSIIDGDNSISIYNSVSRDFKSKYLTLSKC.

Disordered stretches follow at residues methionine 1–isoleucine 67, serine 115–arginine 162, proline 239–tyrosine 290, isoleucine 340–threonine 406, serine 418–asparagine 571, lysine 583–threonine 611, alanine 640–serine 987, and aspartate 1033–glutamine 1278. Polar residues-rich tracts occupy residues glutamine 16 to glutamine 30 and arginine 50 to isoleucine 67. Residues serine 115 to phenylalanine 130 are compositionally biased toward basic and acidic residues. The segment covering arginine 131–lysine 141 has biased composition (basic residues). 2 stretches are compositionally biased toward polar residues: residues asparagine 148–glutamine 157 and proline 239–tyrosine 249. The segment covering proline 250–threonine 259 has biased composition (low complexity). The segment covering threonine 260 to glutamate 273 has biased composition (basic and acidic residues). Residues glutamine 278–tyrosine 290 show a composition bias toward polar residues. Residues lysine 358 to lysine 391 are compositionally biased toward basic and acidic residues. Residues histidine 424–lysine 433 show a composition bias toward basic residues. Over residues proline 450–methionine 470 the composition is skewed to basic and acidic residues. A compositionally biased stretch (polar residues) spans lysine 480–histidine 489. Residues lysine 510–lysine 535 show a composition bias toward basic and acidic residues. 4 stretches are compositionally biased toward polar residues: residues aspartate 550–asparagine 571, asparagine 600–threonine 611, alanine 640–cysteine 654, and alanine 663–phenylalanine 685. Over residues asparagine 686–glycine 701 the composition is skewed to low complexity. Residues asparagine 710–glutamate 727 show a composition bias toward polar residues. The segment covering serine 746–serine 953 has biased composition (low complexity). Positions lysine 955–lysine 973 are enriched in polar residues. An interaction with human UBE2I region spans residues alanine 1024–tyrosine 1072. 3 stretches are compositionally biased toward low complexity: residues serine 1059–serine 1076, serine 1089–arginine 1105, and arginine 1124–serine 1140. A compositionally biased stretch (polar residues) spans serine 1158 to glutamate 1167. A compositionally biased stretch (basic and acidic residues) spans alanine 1175–glutamate 1188. Over residues aspartate 1210–glutamate 1219 the composition is skewed to polar residues.

Belongs to the herpesviridae IE2 family. In terms of assembly, interacts with human UBE2I in the nucleus. Although this interaction does not promote IE2 sumoylation, it represses transactivation activity.

Its subcellular location is the host nucleus. Its function is as follows. Transcriptional transactivator. This Human herpesvirus 6B (strain Z29) (HHV-6 variant B) protein is Immediate-early protein 2 (U90/U86).